We begin with the raw amino-acid sequence, 120 residues long: Small ribosomal subunit protein bS16 (120 aa).

The segment at 80–120 (GLKKRPARNNPHKGEPGKKAQERIAAAKQAAEDAKAAEASA) is disordered. A compositionally biased stretch (basic residues) spans 81-90 (LKKRPARNNP). Basic and acidic residues-rich tracts occupy residues 91 to 101 (HKGEPGKKAQE) and 109 to 120 (AAEDAKAAEASA).

Belongs to the bacterial ribosomal protein bS16 family.

The polypeptide is Small ribosomal subunit protein bS16 (Bartonella bacilliformis (strain ATCC 35685 / KC583 / Herrer 020/F12,63)).